The following is a 374-amino-acid chain: Tetraacyldisaccharide 4'-kinase (374 aa).

59–66 provides a ligand contact to ATP; the sequence is TAGGTGKT.

The protein belongs to the LpxK family.

The catalysed reaction is a lipid A disaccharide + ATP = a lipid IVA + ADP + H(+). Its pathway is glycolipid biosynthesis; lipid IV(A) biosynthesis; lipid IV(A) from (3R)-3-hydroxytetradecanoyl-[acyl-carrier-protein] and UDP-N-acetyl-alpha-D-glucosamine: step 6/6. In terms of biological role, transfers the gamma-phosphate of ATP to the 4'-position of a tetraacyldisaccharide 1-phosphate intermediate (termed DS-1-P) to form tetraacyldisaccharide 1,4'-bis-phosphate (lipid IVA). In Elusimicrobium minutum (strain Pei191), this protein is Tetraacyldisaccharide 4'-kinase.